A 523-amino-acid chain; its full sequence is Asc-type amino acid transporter 1 (523 aa).

A disordered region spans residues 1–28; sequence MAGHTQQPSGRGNPRPAPSPSPVPGTVP. Over residues 15-25 the composition is skewed to pro residues; sequence RPAPSPSPVPG. The next 9 membrane-spanning stretches (helical) occupy residues 40-60, 72-92, 113-133, 268-288, 310-330, 362-382, 388-408, 424-444, and 448-468; these read IGLL…GIFI, VGLA…GSLC, IFGG…MYPT, AIFI…IAYF, LLGY…FGGI, CTPI…MLVG, INYV…GLLL, LLIP…SFIS, and VCGV…LGVF. A disordered region spans residues 499-523; it reads APEEEENGPCPPSLLPATDKPSKPQ.

It belongs to the amino acid-polyamine-organocation (APC) superfamily. In terms of assembly, disulfide-linked heterodimer with the amino acid transport protein SLC3A2/4F2hc. As to expression, expressed in brain, heart, kidney, liver, lung, pancreas, placenta, and skeletal muscle.

It is found in the cell membrane. The catalysed reaction is L-alanine(in) + glycine(out) = L-alanine(out) + glycine(in). It catalyses the reaction L-serine(out) + L-alanine(in) = L-serine(in) + L-alanine(out). It carries out the reaction L-threonine(out) + L-alanine(in) = L-threonine(in) + L-alanine(out). The enzyme catalyses L-cysteine(out) + L-alanine(in) = L-cysteine(in) + L-alanine(out). The catalysed reaction is 2-aminoisobutanoate(out) + L-alanine(in) = 2-aminoisobutanoate(in) + L-alanine(out). It catalyses the reaction D-serine(out) + L-alanine(in) = D-serine(in) + L-alanine(out). It carries out the reaction D-alanine(out) + L-alanine(in) = D-alanine(in) + L-alanine(out). The enzyme catalyses L-valine(out) + L-alanine(in) = L-valine(in) + L-alanine(out). The catalysed reaction is L-methionine(out) + L-alanine(in) = L-methionine(in) + L-alanine(out). It catalyses the reaction beta-alanine(out) + L-alanine(in) = beta-alanine(in) + L-alanine(out). It carries out the reaction D-cysteine(out) + L-alanine(in) = D-cysteine(in) + L-alanine(out). The enzyme catalyses D-threonine(out) + L-alanine(in) = D-threonine(in) + L-alanine(out). The catalysed reaction is D-isoleucine(out) + D-serine(in) = D-isoleucine(in) + D-serine(out). It catalyses the reaction D-serine(in) = D-serine(out). Associates with SLC3A2/4F2hc to form a functional heterodimeric complex that translocates small neutral L- and D-amino acids across the plasma membrane. Preferentially mediates exchange transport, but can also operate via facilitated diffusion. Acts as a major transporter for glycine, L- and D-serine in the central nervous system. At the spinal cord and brainstem regulates glycine metabolism and glycinergic inhibitory neurotransmission by providing for glycine de novo synthesis from L-serine and glycine recycling from astrocytes to glycinergic motor neurons. At Schaffer collateral-CA1 synapses mediates D-serine and glycine release that modulates post-synaptic activation of NMDA receptors and excitatory glutamatergic transmission. May regulate D-serine release from mesenchymal progenitors located in developing subcutaneous adipose tissue, favoring white adipocyte over thermogenic beige adipocyte lineage commitment. The sequence is that of Asc-type amino acid transporter 1 (SLC7A10) from Homo sapiens (Human).